The following is a 390-amino-acid chain: MAQRYDDLPHYGGMDGVGLPSSMYGDPHAARSMKSVHHLNHGPPLHPHQYPHSAHTNAMPPSMGSSVNDALKRDKDSIYGHPLFPLLALIFEKCELATCTPREPGVAGGDVCSSESFNEDIAVFSKQIRAEKPLFSSNPELDNLMIQAIQVLRFHLLELEKVHELCDNFCHRYISCLEGKMPIDLVIDDRDGGSKSDSEDLTRSAPLTDQPSWSRDHDDAASIRSGGTPGPSSGGHTSHSGDNSSEQGDGLDNSIASPSTGDDDDPDKEKKRNKGRGIFPKVATNIMRAWLFQHLTHPYPSEEQKKQLAQDTGLTILQVNNWFINARRRIVQPMIDQSNRAVSQGTPYNPDGQPIGGFVMDGQQHMGIRAPGPMSGMGMNMGMEGQWHYM.

The 84-residue stretch at 108–191 (GGDVCSSESF…PIDLVIDDRD (84 aa)) folds into the MEIS N-terminal domain. The segment covering 188–202 (DDRDGGSKSDSEDLT) has biased composition (basic and acidic residues). A disordered region spans residues 188–279 (DDRDGGSKSD…KKRNKGRGIF (92 aa)). The homeobox; TALE-type DNA-binding region spans 272–334 (RNKGRGIFPK…NARRRIVQPM (63 aa)). The interval 299-329 (YPSEEQKKQLAQDTGLTILQVNNWFINARRR) is interaction with DNA.

The protein belongs to the TALE/MEIS homeobox family. In terms of assembly, interacts with pbx1 isoform b. In the embryo, displays a broad expression pattern with high levels observed in tissues of neural cell fate such as midbrain, hindbrain, dorsal portion of the neural tube, and neural crest-derived branchial arches. Widely expressed in the adult with highest levels in brain and spleen.

The protein localises to the cytoplasm. It localises to the nucleus. Induces expression of a number of neural crest marker genes as part of a heterodimer with isoform b of pbx1, to specify neural crest cell fate. Binds to a highly conserved region in the promoter of the neural crest marker gene zic3. This is Homeobox protein Meis1 (meis1) from Xenopus laevis (African clawed frog).